Reading from the N-terminus, the 347-residue chain is 3-keto-steroid reductase ERG27 (347 aa).

Residues Leu15, Thr38, and Arg44 each coordinate NADP(+). Active-site proton donor residues include Ser179 and Tyr202. NADP(+) is bound by residues Tyr202, Lys206, and Ser237. Lys206 serves as the catalytic Lowers pKa of active site Tyr. Thr345 carries the phosphothreonine modification.

The protein belongs to the short-chain dehydrogenases/reductases (SDR) family. ERG27 subfamily. Heterotetramer of ERG25, ERG26, ERG27 and ERG28. ERG28 acts as a scaffold to tether ERG27 and other 4,4-demethylation-related enzymes, forming a demethylation enzyme complex, in the endoplasmic reticulum. Interacts with ERG25 and ERG28. Also interacts with ERG7, but only in lipid particles.

It localises to the endoplasmic reticulum membrane. The protein localises to the lipid droplet. It catalyses the reaction 3-dehydro-4alpha-methylzymosterol + NADPH + H(+) = 4alpha-methylzymosterol + NADP(+). Its pathway is steroid biosynthesis; zymosterol biosynthesis; zymosterol from lanosterol: step 5/6. Its function is as follows. 3-keto-steroid reductase; part of the third module of ergosterol biosynthesis pathway that includes the late steps of the pathway. ERG27 is a catalytic component of the C-4 demethylation complex that catalyze the reduction of the keto group on the C-3. The third module or late pathway involves the ergosterol synthesis itself through consecutive reactions that mainly occur in the endoplasmic reticulum (ER) membrane. Firstly, the squalene synthase ERG9 catalyzes the condensation of 2 farnesyl pyrophosphate moieties to form squalene, which is the precursor of all steroids. Squalene synthase is crucial for balancing the incorporation of farnesyl diphosphate (FPP) into sterol and nonsterol isoprene synthesis. Secondly, the squalene epoxidase ERG1 catalyzes the stereospecific oxidation of squalene to (S)-2,3-epoxysqualene, which is considered to be a rate-limiting enzyme in steroid biosynthesis. Then, the lanosterol synthase ERG7 catalyzes the cyclization of (S)-2,3 oxidosqualene to lanosterol, a reaction that forms the sterol core. In the next steps, lanosterol is transformed to zymosterol through a complex process involving various demethylation, reduction and desaturation reactions. The lanosterol 14-alpha-demethylase ERG11 (also known as CYP51) catalyzes C14-demethylation of lanosterol to produce 4,4'-dimethyl cholesta-8,14,24-triene-3-beta-ol, which is critical for ergosterol biosynthesis. The C-14 reductase ERG24 reduces the C14=C15 double bond of 4,4-dimethyl-cholesta-8,14,24-trienol to produce 4,4-dimethyl-cholesta-8,24-dienol. 4,4-dimethyl-cholesta-8,24-dienol is substrate of the C-4 demethylation complex ERG25-ERG26-ERG27 in which ERG25 catalyzes the three-step monooxygenation required for the demethylation of 4,4-dimethyl and 4alpha-methylsterols, ERG26 catalyzes the oxidative decarboxylation that results in a reduction of the 3-beta-hydroxy group at the C-3 carbon to an oxo group, and ERG27 is responsible for the reduction of the keto group on the C-3. ERG28 has a role as a scaffold to help anchor ERG25, ERG26 and ERG27 to the endoplasmic reticulum and ERG29 regulates the activity of the iron-containing C4-methylsterol oxidase ERG25. Then, the sterol 24-C-methyltransferase ERG6 catalyzes the methyl transfer from S-adenosyl-methionine to the C-24 of zymosterol to form fecosterol. The C-8 sterol isomerase ERG2 catalyzes the reaction which results in unsaturation at C-7 in the B ring of sterols and thus converts fecosterol to episterol. The sterol-C5-desaturase ERG3 then catalyzes the introduction of a C-5 double bond in the B ring to produce 5-dehydroepisterol. The C-22 sterol desaturase ERG5 further converts 5-dehydroepisterol into ergosta-5,7,22,24(28)-tetraen-3beta-ol by forming the C-22(23) double bond in the sterol side chain. Finally, ergosta-5,7,22,24(28)-tetraen-3beta-ol is substrate of the C-24(28) sterol reductase ERG4 to produce ergosterol. Functionally, facilitates the association of ERG7 with lipid particles preventing its digestion in the endoplasmic reticulum and the lipid particles. This chain is 3-keto-steroid reductase ERG27, found in Saccharomyces cerevisiae (strain ATCC 204508 / S288c) (Baker's yeast).